A 146-amino-acid chain; its full sequence is 3-hydroxyacyl-[acyl-carrier-protein] dehydratase FabZ (146 aa).

His51 is an active-site residue.

The protein belongs to the thioester dehydratase family. FabZ subfamily.

The protein localises to the cytoplasm. The catalysed reaction is a (3R)-hydroxyacyl-[ACP] = a (2E)-enoyl-[ACP] + H2O. In terms of biological role, involved in unsaturated fatty acids biosynthesis. Catalyzes the dehydration of short chain beta-hydroxyacyl-ACPs and long chain saturated and unsaturated beta-hydroxyacyl-ACPs. The polypeptide is 3-hydroxyacyl-[acyl-carrier-protein] dehydratase FabZ (Staphylococcus aureus (strain Mu3 / ATCC 700698)).